We begin with the raw amino-acid sequence, 330 residues long: DNA-directed RNA polymerase subunit alpha (330 aa).

The tract at residues 1–232 (MAILAFQKPE…SHFSLFAENK (232 aa)) is alpha N-terminal domain (alpha-NTD). An alpha C-terminal domain (alpha-CTD) region spans residues 248 to 330 (EDSLHMRQLL…DISKYKLDKD (83 aa)).

It belongs to the RNA polymerase alpha chain family. As to quaternary structure, homodimer. The RNAP catalytic core consists of 2 alpha, 1 beta, 1 beta' and 1 omega subunit. When a sigma factor is associated with the core the holoenzyme is formed, which can initiate transcription.

It catalyses the reaction RNA(n) + a ribonucleoside 5'-triphosphate = RNA(n+1) + diphosphate. In terms of biological role, DNA-dependent RNA polymerase catalyzes the transcription of DNA into RNA using the four ribonucleoside triphosphates as substrates. This is DNA-directed RNA polymerase subunit alpha from Porphyromonas gingivalis (strain ATCC BAA-308 / W83).